Consider the following 98-residue polypeptide: Small ribosomal subunit protein bS21B (98 aa).

The segment at 61-98 is disordered; the sequence is KLQREGLLPMKPKPVFGAGAGGERGGRGGPGAGPRGPR. Over residues 78–98 the composition is skewed to gly residues; that stretch reads AGAGGERGGRGGPGAGPRGPR.

The protein belongs to the bacterial ribosomal protein bS21 family.

In Bradyrhizobium diazoefficiens (strain JCM 10833 / BCRC 13528 / IAM 13628 / NBRC 14792 / USDA 110), this protein is Small ribosomal subunit protein bS21B.